A 360-amino-acid chain; its full sequence is Isopentenyl-diphosphate delta-isomerase (360 aa).

12-13 (RK) is a substrate binding site. FMN contacts are provided by residues serine 70, 71-73 (SMT), serine 101, and asparagine 130. 101 to 103 (SMR) contributes to the substrate binding site. Glutamine 165 is a binding site for substrate. Glutamate 166 contributes to the Mg(2+) binding site. FMN contacts are provided by residues lysine 197, 288-290 (GIR), and 309-310 (AG).

This sequence belongs to the IPP isomerase type 2 family. As to quaternary structure, homooctamer. Dimer of tetramers. The cofactor is FMN. NADPH serves as cofactor. Requires Mg(2+) as cofactor.

It is found in the cytoplasm. The catalysed reaction is isopentenyl diphosphate = dimethylallyl diphosphate. In terms of biological role, involved in the biosynthesis of isoprenoids. Catalyzes the 1,3-allylic rearrangement of the homoallylic substrate isopentenyl (IPP) to its allylic isomer, dimethylallyl diphosphate (DMAPP). The protein is Isopentenyl-diphosphate delta-isomerase of Chlorobium limicola (strain DSM 245 / NBRC 103803 / 6330).